The chain runs to 95 residues: Protein Vpr (95 aa).

The tract at residues 1 to 42 is homooligomerization; that stretch reads MERAPEDAGPQREPYNEWALELLEELKNEAVRHFPRIWLHGL. Residues Ser79, Ser93, and Ser95 each carry the phosphoserine; by host modification.

It belongs to the HIV-1 VPR protein family. Homooligomer, may form homodimer. Interacts with p6-gag region of the Pr55 Gag precursor protein through a (Leu-X-X)4 motif near the C-terminus of the P6gag protein. Interacts with host UNG. May interact with host RAD23A/HHR23A. Interacts with host VPRBP/DCAF1, leading to hijack the CUL4A-RBX1-DDB1-DCAF1/VPRBP complex, mediating ubiquitination of host proteins such as TERT and ZGPAT and arrest of the cell cycle in G2 phase. Phosphorylated on several residues by host. These phosphorylations regulate VPR activity for the nuclear import of the HIV-1 pre-integration complex.

The protein localises to the virion. The protein resides in the host nucleus. Its subcellular location is the host extracellular space. During virus replication, may deplete host UNG protein, and incude G2-M cell cycle arrest. Acts by targeting specific host proteins for degradation by the 26S proteasome, through association with the cellular CUL4A-DDB1 E3 ligase complex by direct interaction with host VPRPB/DCAF-1. Cell cycle arrest reportedly occurs within hours of infection and is not blocked by antiviral agents, suggesting that it is initiated by the VPR carried into the virion. Additionally, VPR induces apoptosis in a cell cycle dependent manner suggesting that these two effects are mechanistically linked. Detected in the serum and cerebrospinal fluid of AIDS patient, VPR may also induce cell death to bystander cells. In terms of biological role, during virus entry, plays a role in the transport of the viral pre-integration (PIC) complex to the host nucleus. This function is crucial for viral infection of non-dividing macrophages. May act directly at the nuclear pore complex, by binding nucleoporins phenylalanine-glycine (FG)-repeat regions. This is Protein Vpr from Homo sapiens (Human).